Reading from the N-terminus, the 419-residue chain is MTTQLEQAWELAKQRFAAVGIDVEEALRQLDRLPVSMHCWQGDDVSGFENPEGSLTGGIQATGNYPGKARNASELRADLEQAMRLIPGPKRLNLHAIYLESDTPVSRDQIKPEHFKNWGEWAKANQLGLDFNPSCFSHPLSADGFTLSHPDDSIRQFWIDHCKASRRVSAYFGEQLGTPSVMNIWIPDGMKDITVDRLAPRQRLLAALDEVISKKLNPAHHIDAVESKLFGIGAESYTVGSNEFYMGYATSRQTALCLDAGHFHPTEVISDKISAAMLYVPQLLLHVSRPVRWDCDHVVLLDDETQAIASEIVRHDLFDRVHIGLDFFDASINRIAAWVIGTRNMKKALLRALLEPTAELRKLEAAGDYTARLALLEEQKSLPWQAVWEMYCQRHDTPAGSEWLESVRAYEKEILSQRG.

Residues H262, D294, and D296 each coordinate Mn(2+).

Belongs to the rhamnose isomerase family. In terms of assembly, homotetramer. Mn(2+) is required as a cofactor.

It is found in the cytoplasm. It catalyses the reaction L-rhamnopyranose = L-rhamnulose. The protein operates within carbohydrate degradation; L-rhamnose degradation; glycerone phosphate from L-rhamnose: step 1/3. Catalyzes the interconversion of L-rhamnose and L-rhamnulose. This chain is L-rhamnose isomerase, found in Shigella boydii serotype 4 (strain Sb227).